The sequence spans 250 residues: S-adenosyl-L-methionine-dependent 2-deoxy-scyllo-inosamine dehydrogenase (250 aa).

[4Fe-4S] cluster-binding residues include cysteine 16, cysteine 20, cysteine 23, cysteine 169, cysteine 187, and glutamate 223.

This sequence belongs to the radical SAM superfamily. The cofactor is [4Fe-4S] cluster.

It catalyses the reaction 2-deoxy-scyllo-inosamine + S-adenosyl-L-methionine = 3-amino-2,3-dideoxy-scyllo-inosose + 5'-deoxyadenosine + L-methionine + H(+). It participates in antibiotic biosynthesis; butirosin biosynthesis. In terms of biological role, catalyzes the radical S-adenosyl-L-methionine (SAM)-dependent two-electron oxidation of 2-deoxy-scyllo-inosamine (DOIA) to amino-dideoxy-scyllo-inosose (amino-DOI) in the biosynthetic pathway of butirosin. In Niallia circulans (Bacillus circulans), this protein is S-adenosyl-L-methionine-dependent 2-deoxy-scyllo-inosamine dehydrogenase (btrN).